Reading from the N-terminus, the 375-residue chain is Formate dehydrogenase (375 aa).

2 residues coordinate substrate: Ile94 and Asn120. NAD(+)-binding positions include 175–176 (RI), Asp196, 231–235 (PLHEK), Thr257, Asp283, 312–315 (HMSG), and Ser358.

Belongs to the D-isomer specific 2-hydroxyacid dehydrogenase family. FDH subfamily. In terms of assembly, homodimer.

It is found in the cytoplasm. It catalyses the reaction formate + NAD(+) = CO2 + NADH. In terms of biological role, catalyzes the NAD(+)-dependent oxidation of formate to carbon dioxide. Formate oxidation is the final step in the methanol oxidation pathway in methylotrophic microorganisms. Has a role in the detoxification of exogenous formate in non-methylotrophic organisms. The sequence is that of Formate dehydrogenase from Neurospora crassa (strain ATCC 24698 / 74-OR23-1A / CBS 708.71 / DSM 1257 / FGSC 987).